We begin with the raw amino-acid sequence, 89 residues long: Elongation factor 1-beta (89 aa).

Belongs to the EF-1-beta/EF-1-delta family.

In terms of biological role, promotes the exchange of GDP for GTP in EF-1-alpha/GDP, thus allowing the regeneration of EF-1-alpha/GTP that could then be used to form the ternary complex EF-1-alpha/GTP/AAtRNA. This chain is Elongation factor 1-beta, found in Methanococcus aeolicus (strain ATCC BAA-1280 / DSM 17508 / OCM 812 / Nankai-3).